The primary structure comprises 331 residues: Glyceraldehyde-3-phosphate dehydrogenase (331 aa).

Residues 10 to 11 (RI), aspartate 31, lysine 75, and threonine 117 contribute to the NAD(+) site. Residues 148-150 (SCT) and threonine 179 each bind D-glyceraldehyde 3-phosphate. Residue cysteine 149 is the Nucleophile of the active site. Asparagine 180 serves as a coordination point for NAD(+). D-glyceraldehyde 3-phosphate-binding positions include arginine 194, 207-208 (TG), and arginine 230. NAD(+) is bound at residue asparagine 311.

The protein belongs to the glyceraldehyde-3-phosphate dehydrogenase family. In terms of assembly, homotetramer.

The protein localises to the cytoplasm. It catalyses the reaction D-glyceraldehyde 3-phosphate + phosphate + NAD(+) = (2R)-3-phospho-glyceroyl phosphate + NADH + H(+). The protein operates within carbohydrate degradation; glycolysis; pyruvate from D-glyceraldehyde 3-phosphate: step 1/5. In terms of biological role, catalyzes the oxidative phosphorylation of glyceraldehyde 3-phosphate (G3P) to 1,3-bisphosphoglycerate (BPG) using the cofactor NAD. The first reaction step involves the formation of a hemiacetal intermediate between G3P and a cysteine residue, and this hemiacetal intermediate is then oxidized to a thioester, with concomitant reduction of NAD to NADH. The reduced NADH is then exchanged with the second NAD, and the thioester is attacked by a nucleophilic inorganic phosphate to produce BPG. In Thermus aquaticus, this protein is Glyceraldehyde-3-phosphate dehydrogenase (gap).